Here is a 349-residue protein sequence, read N- to C-terminus: FK506-binding protein-like (349 aa).

Position 3 is a phosphothreonine (Thr-3). The segment at 36 to 55 is disordered; the sequence is RQQPRDPPTETLELEVSPDP. TPR repeat units follow at residues 210-243, 252-285, and 286-319; these read AREERARGTELFRAGNPEGAARCYGRALRLLLTL, TVLHANLAACQLLLGQPQLAAQSCDRVLEREPGH, and LKALYRRGVAQAALGNLEKATADLKKVLAIDPKN.

As to quaternary structure, forms a ternary complex with CDKN1A/p21 and HSP90AB1/Hsp90. In terms of tissue distribution, ubiquitously expressed with higher levels in testis.

Its function is as follows. May be involved in response to X-ray. Regulates p21 protein stability by binding to Hsp90 and p21. The chain is FK506-binding protein-like (FKBPL) from Homo sapiens (Human).